Reading from the N-terminus, the 1243-residue chain is Serine/threonine-protein kinase WNK4 (1243 aa).

The span at 1 to 17 shows a compositional bias: polar residues; it reads MLASPATETTVLMSQTE. The tract at residues 1-142 is disordered; that stretch reads MLASPATETT…GPGSREPLRV (142 aa). Low complexity predominate over residues 65–77; that stretch reads VDLGLLSSWSLPA. Residues 78–103 show a composition bias toward pro residues; that stretch reads SPAPDPPDPPDSAGPGPARSPPPSSK. Position 97 is a phosphoserine (Ser-97). Residues 118-127 are compositionally biased toward basic and acidic residues; that stretch reads AAEDSARPEL. Glycyl lysine isopeptide (Lys-Gly) (interchain with G-Cter in ubiquitin) cross-links involve residues Lys-157 and Lys-175. The Protein kinase domain occupies 174 to 432; the sequence is LKFDIEIGRG…IQDLLAHAFF (259 aa). Ser-184 provides a ligand contact to ATP. Residues Lys-186, Lys-226, and Lys-241 each participate in a glycyl lysine isopeptide (Lys-Gly) (interchain with G-Cter in ubiquitin) cross-link. Residues 254–257 and Lys-304 contribute to the ATP site; that span reads TELM. The Proton acceptor role is filled by Asp-321. Lys-328 participates in a covalent cross-link: Glycyl lysine isopeptide (Lys-Gly) (interchain with G-Cter in ubiquitin). 2 positions are modified to phosphoserine; by autocatalysis: Ser-331 and Ser-335. Residues Lys-387, Lys-393, Lys-450, and Lys-454 each participate in a glycyl lysine isopeptide (Lys-Gly) (interchain with G-Cter in ubiquitin) cross-link. Residues 526–564 form a disordered region; sequence KARELEALPPEPGPPPATVPMAPGPPSVFPPEPEEPEAD. Positions 534 to 556 are enriched in pro residues; it reads PPEPGPPPATVPMAPGPPSVFPP. The segment at 557–567 is interaction with KLHL3; sequence EPEEPEADQHQ. Position 575 is a phosphoserine (Ser-575). Residues 630-641 are compositionally biased toward low complexity; the sequence is SGPGSDFSPGDS. Disordered regions lie at residues 630–683, 751–871, and 943–1110; these read SGPG…SVSD, DTGP…STPE, and SPSP…SPVW. Basic residues predominate over residues 663 to 676; it reads PPGRNLRRRPRSRL. Pro residues predominate over residues 767–780; it reads EPAPLPALPVPLPD. Residues 797–812 show a composition bias toward low complexity; it reads WTAFSTSSSSPGTPLS. A compositionally biased stretch (pro residues) spans 822-843; it reads PISPGPIFPITSPPCHPSPSPF. Low complexity-rich tracts occupy residues 844-854, 862-871, and 943-952; these read SPISSQVSSNP, PLPFSSSTPE, and SPSPGLLSQS. The span at 953–970 shows a compositional bias: pro residues; sequence PPAPPSPLPSLPLPPPVA. Lys-1010 is covalently cross-linked (Glycyl lysine isopeptide (Lys-Gly) (interchain with G-Cter in ubiquitin)). Positions 1016-1019 match the RFXV motif motif; it reads RFQV. Ser-1035 carries the phosphoserine modification. The segment covering 1065–1077 has biased composition (basic and acidic residues); that stretch reads ETREALAESDRAA. Residues Lys-1144, Lys-1157, and Lys-1158 each participate in a glycyl lysine isopeptide (Lys-Gly) (interchain with G-Cter in ubiquitin) cross-link. Positions 1166–1243 are disordered; the sequence is RLGKQPPPGI…VTFAGDVGRM (78 aa). 2 stretches are compositionally biased toward polar residues: residues 1193-1204 and 1216-1228; these read SFPTSRRNSLQR and NSLSGSSTGSQEQ. A Phosphoserine modification is found at Ser-1217.

It belongs to the protein kinase superfamily. Ser/Thr protein kinase family. WNK subfamily. Interacts with the C-terminal region of KCNJ1. Requires Mg(2+) as cofactor. In terms of processing, autophosphorylated at Ser-331 and Ser-335, promoting its activation. Phosphorylated by WNK1 and WNK3. Phosphorylated at Ser-575 in a MAP3K15/ASK3-dependent process in response to osmotic stress or hypotonic low-chloride stimulation. Post-translationally, ubiquitinated by the BCR(KLHL3) complex, leading to its degradation. Also ubiquitinated by the BCR(KLHL2) complex. As to expression, expressed in kidney, colon and skin.

Its subcellular location is the cell junction. It is found in the tight junction. The enzyme catalyses L-seryl-[protein] + ATP = O-phospho-L-seryl-[protein] + ADP + H(+). It carries out the reaction L-threonyl-[protein] + ATP = O-phospho-L-threonyl-[protein] + ADP + H(+). Activation requires autophosphorylation of Ser-331 and Ser-335. Autophosphorylation and subsequent activation is inhibited by increases in intracellular ionic strength: Cl(-) potently inhibits WNK4 kinase activity via direct binding. Also inhibited by K(+) ions. In terms of biological role, serine/threonine-protein kinase component of the WNK4-SPAK/OSR1 kinase cascade, which acts as a key regulator of ion transport in the distal nephron and blood pressure. The WNK4-SPAK/OSR1 kinase cascade is composed of WNK4, which mediates phosphorylation and activation of downstream kinases OXSR1/OSR1 and STK39/SPAK. Following activation, OXSR1/OSR1 and STK39/SPAK catalyze phosphorylation of ion cotransporters, such as SLC12A1/NKCC2, SLC12A2/NKCC1, SLC12A3/NCC, SLC12A5/KCC2 or SLC12A6/KCC3, regulating their activity. Acts as a molecular switch that regulates the balance between renal salt reabsorption and K(+) secretion by modulating the activities of renal transporters and channels, including the Na-Cl cotransporter SLC12A3/NCC and the K(+) channel, KCNJ1/ROMK. Regulates NaCl reabsorption in the distal nephron by activating the thiazide-sensitive Na-Cl cotransporter SLC12A3/NCC in distal convoluted tubule cells of kidney: activates SLC12A3/NCC in a OXSR1/OSR1- and STK39/SPAK-dependent process. Also acts as a scaffold protein independently of its protein kinase activity: negatively regulates cell membrane localization of various transporters and channels (CFTR, KCNJ1/ROMK, SLC4A4, SLC26A9 and TRPV4) by clathrin-dependent endocytosis. Also inhibits the activity of the epithelial Na(+) channel (ENaC) SCNN1A, SCNN1B, SCNN1D in a inase-independent mechanism. May also phosphorylate NEDD4L. In Homo sapiens (Human), this protein is Serine/threonine-protein kinase WNK4.